The following is a 465-amino-acid chain: 28S rRNA (cytosine-C(5))-methyltransferase (465 aa).

The residue at position 2 (G2) is an N-acetylglycine. Position 167 is a phosphoserine (S167). S-adenosyl-L-methionine-binding positions include C234–K240, D258, R263, and D305. C359 (nucleophile) is an active-site residue. Residues T430–T465 form a disordered region.

The protein belongs to the class I-like SAM-binding methyltransferase superfamily. RsmB/NOP family. In the hippocampus, specifically expressed in adult hippocampal NG2-positive oligodendrocyte precursor cells (at protein level).

Its subcellular location is the nucleus. The protein resides in the nucleolus. The catalysed reaction is a cytidine in 28S rRNA + S-adenosyl-L-methionine = a 5-methylcytidine in 28S rRNA + S-adenosyl-L-homocysteine + H(+). S-adenosyl-L-methionine-dependent methyltransferase that specifically methylates the C(5) position of cytosine 3438 (m5C3438) in 28S rRNA. m5C3782 promotes protein translation without affecting ribosome biogenesis and fidelity. Required for corpus callosum and cerebral cortex development. In Mus musculus (Mouse), this protein is 28S rRNA (cytosine-C(5))-methyltransferase.